The primary structure comprises 457 residues: Multidrug resistance protein MdtK (457 aa).

A run of 12 helical transmembrane segments spans residues 11-31, 53-73, 93-113, 127-147, 160-180, 188-208, 243-263, 276-296, 314-334, 357-377, 387-407, and 418-438; these read LLAL…MGFV, IWLP…PVIA, WLAG…GYII, AVGY…FQVA, GMVI…IFIY, LGGV…FIAM, LPIA…ALLV, IALN…AAVT, AART…IFTV, LMLL…GSGI, IFFI…YILA, and PAGF…MMML.

This sequence belongs to the multi antimicrobial extrusion (MATE) (TC 2.A.66.1) family. MdtK subfamily.

The protein resides in the cell inner membrane. In terms of biological role, multidrug efflux pump that functions probably as a Na(+)/drug antiporter. This Citrobacter koseri (strain ATCC BAA-895 / CDC 4225-83 / SGSC4696) protein is Multidrug resistance protein MdtK.